Consider the following 444-residue polypeptide: Methionine aminopeptidase 2-1 (444 aa).

Residues 1 to 92 are disordered; the sequence is MAAQVTEKLQ…VPVSNLFPNN (92 aa). The segment covering 15–29 has biased composition (polar residues); sequence NGQNGDAKANSTAVG. Over residues 34 to 45 the composition is skewed to acidic residues; it reads GEAEDDSDDEKE. Over residues 59 to 73 the composition is skewed to basic residues; the sequence is AKKKKRKSKKKKKGG. Residue His197 coordinates substrate. A divalent metal cation-binding residues include Asp217, Asp228, and His297. Substrate is bound at residue His305. A divalent metal cation-binding residues include Glu330 and Glu425.

It belongs to the peptidase M24A family. Methionine aminopeptidase eukaryotic type 2 subfamily. The cofactor is Co(2+). Requires Zn(2+) as cofactor. Mn(2+) is required as a cofactor. Fe(2+) serves as cofactor.

It is found in the cytoplasm. The enzyme catalyses Release of N-terminal amino acids, preferentially methionine, from peptides and arylamides.. In terms of biological role, cotranslationally removes the N-terminal methionine from nascent proteins. The N-terminal methionine is often cleaved when the second residue in the primary sequence is small and uncharged (Met-Ala-, Cys, Gly, Pro, Ser, Thr, or Val). This Neosartorya fischeri (strain ATCC 1020 / DSM 3700 / CBS 544.65 / FGSC A1164 / JCM 1740 / NRRL 181 / WB 181) (Aspergillus fischerianus) protein is Methionine aminopeptidase 2-1.